We begin with the raw amino-acid sequence, 344 residues long: rRNA 2'-O-methyltransferase fibrillarin (344 aa).

The disordered stretch occupies residues 1–113 (MGKPGFSPRG…GFKGGKTVTI (113 aa)). The span at 8–107 (PRGGGGGGGG…RGGGAGGFKG (100 aa)) shows a compositional bias: gly residues. Asymmetric dimethylarginine occurs at positions 9, 23, 25, 40, 42, 48, 51, 58, 63, 71, 77, 83, 88, 93, and 98. S-adenosyl-L-methionine is bound by residues 197-198 (TT), 216-217 (EF), 241-242 (DA), and 261-264 (DVAQ).

This sequence belongs to the methyltransferase superfamily. Fibrillarin family. As to quaternary structure, component of box C/D small nucleolar ribonucleoprotein (snoRNP) particles. It is associated with the U3, U8 and U13 small nuclear RNAs. In terms of processing, by homology to other fibrillarins, some or all of the N-terminal domain arginines are modified to asymmetric dimethylarginine (DMA).

Its subcellular location is the nucleus. The protein resides in the nucleolus. The enzyme catalyses L-glutaminyl-[histone H2A] + S-adenosyl-L-methionine = N(5)-methyl-L-glutaminyl-[histone H2A] + S-adenosyl-L-homocysteine + H(+). Its function is as follows. S-adenosyl-L-methionine-dependent methyltransferase that has the ability to methylate both RNAs and proteins. Involved in pre-rRNA processing. Utilizes the methyl donor S-adenosyl-L-methionine to catalyze the site-specific 2'-hydroxyl methylation of ribose moieties in pre-ribosomal RNA. Site specificity is provided by a guide RNA that base pairs with the substrate. Methylation occurs at a characteristic distance from the sequence involved in base pairing with the guide RNA. Also acts as a protein methyltransferase by mediating methylation of 'Gln-105' of histone H2A (H2AQ105me), a modification that impairs binding of the FACT complex and is specifically present at 35S ribosomal DNA locus. The protein is rRNA 2'-O-methyltransferase fibrillarin of Drosophila melanogaster (Fruit fly).